Here is a 947-residue protein sequence, read N- to C-terminus: Serine-aspartate repeat-containing protein C (947 aa).

The signal sequence occupies residues 1–50 (MNNKKTATNRKGMIPNRLNKFSIRKYSVGTASILVGTTLIFGLSGHEAKA). The disordered stretch occupies residues 51 to 164 (AEHTNGELNQ…STTPKTTTIK (114 aa)). The interval 51 to 495 (AEHTNGELNQ…GSSTANGDQK (445 aa)) is ligand binding A region. The span at 56–71 (GELNQSKNETTAPSEN) shows a compositional bias: polar residues. Residues 72–83 (KTTKKVDSRQLK) are compositionally biased toward basic and acidic residues. Over residues 84-155 (DNTQTATADQ…SNLTQAKDVS (72 aa)) the composition is skewed to polar residues. CNA-B domains follow at residues 496–606 (KYNL…YKTP) and 607–717 (KYSL…EEET). The tract at residues 678–927 (TQTGTNTTED…NNSNNGTLFG (250 aa)) is disordered. Composition is skewed to acidic residues over residues 685 to 695 (TEDDKDADGGE) and 712 to 886 (YYEE…DSDS). The short motif at 910–914 (LPETG) is the LPXTG sorting signal element. A compositionally biased stretch (low complexity) spans 912–927 (ETGSENNNSNNGTLFG). The residue at position 913 (Thr-913) is a Pentaglycyl murein peptidoglycan amidated threonine. A propeptide spans 914–947 (GSENNNSNNGTLFGGLFAALGSLLLFGRRKKQNK) (removed by sortase).

Belongs to the serine-aspartate repeat-containing protein (SDr) family. In terms of assembly, homodimerizes; via N2-Domain. Interacts with host NRXN1; this interaction mediates bacterial attachment to host cells.

The protein resides in the secreted. It is found in the cell wall. In terms of biological role, cell surface-associated calcium-binding protein which plays an important role in adhesion and pathogenesis. Mediates interactions with components of the extracellular matrix such as host NRXN1 to promote bacterial adhesion. The polypeptide is Serine-aspartate repeat-containing protein C (sdrC) (Staphylococcus aureus (strain USA300)).